A 241-amino-acid polypeptide reads, in one-letter code: Fatty acid metabolism regulator protein (241 aa).

The region spanning 11 to 79 (QSPAALAEEY…HGKPTKVNNI (69 aa)) is the HTH gntR-type domain. Residues 39-58 (ERDLADKIGVTRTTLREVLQ) constitute a DNA-binding region (H-T-H motif).

In terms of assembly, homodimer.

The protein localises to the cytoplasm. In terms of biological role, multifunctional regulator of fatty acid metabolism. This is Fatty acid metabolism regulator protein from Haemophilus influenzae (strain ATCC 51907 / DSM 11121 / KW20 / Rd).